The chain runs to 72 residues: Translation initiation factor IF-1 (72 aa).

Residues 1–72 enclose the S1-like domain; sequence MSKEDMIEFS…TKGRITFRFK (72 aa).

This sequence belongs to the IF-1 family. In terms of assembly, component of the 30S ribosomal translation pre-initiation complex which assembles on the 30S ribosome in the order IF-2 and IF-3, IF-1 and N-formylmethionyl-tRNA(fMet); mRNA recruitment can occur at any time during PIC assembly.

Its subcellular location is the cytoplasm. One of the essential components for the initiation of protein synthesis. Stabilizes the binding of IF-2 and IF-3 on the 30S subunit to which N-formylmethionyl-tRNA(fMet) subsequently binds. Helps modulate mRNA selection, yielding the 30S pre-initiation complex (PIC). Upon addition of the 50S ribosomal subunit IF-1, IF-2 and IF-3 are released leaving the mature 70S translation initiation complex. The chain is Translation initiation factor IF-1 from Acidiphilium cryptum (strain JF-5).